The sequence spans 507 residues: Cobyric acid synthase (507 aa).

The GATase cobBQ-type domain maps to 251–448 (DIDIAVVHLP…LHGLFDSDAF (198 aa)). C332 (nucleophile) is an active-site residue. The active site involves H440.

The protein belongs to the CobB/CobQ family. CobQ subfamily.

It participates in cofactor biosynthesis; adenosylcobalamin biosynthesis. In terms of biological role, catalyzes amidations at positions B, D, E, and G on adenosylcobyrinic A,C-diamide. NH(2) groups are provided by glutamine, and one molecule of ATP is hydrogenolyzed for each amidation. The protein is Cobyric acid synthase of Klebsiella pneumoniae subsp. pneumoniae (strain ATCC 700721 / MGH 78578).